A 369-amino-acid chain; its full sequence is FAD-dependent monooxygenase FPY4 (369 aa).

It belongs to the aromatic-ring hydroxylase family. The cofactor is FAD.

It participates in secondary metabolite biosynthesis. Its function is as follows. FAD-dependent monooxygenase; part of the gene cluster that mediates the biosynthesis of the gamma-pyrones fusapyrone (FPY) and deoxyfusapyrone (dFPY). FPY is an undecaketide and thus likely synthesized by the polyketide synthase FPY1 from acetyl-CoA functioning as starter unit and the addition of 10 malonyl-CoA extender units by successive Claisen-condensations. Next to this, FPY shares some rare features: C-glycosylated 4-deoxyglucose at C-3, a gem-dimethyl group at C-13, and an alpha-beta to beta-gamma double bond shift at C-20. During FPY biosynthesis mono-C-methyl groups are transferred to the tetra-, penta-, hexa- and heptaketide, while two C-methyl groups are transferred to the nonaketide, suggesting that the CMet domain is programmed to selectively catalyze two successive C-alpha-methylation reactions of the nonaketide, while other alpha-carbons are non- or mono-methylated only. While the origin of the 4'-deoxyglucose moiety remains opaque, its transfer to C-3 is most likely mediated by the C-glycosyltransferase FPY2. Next to this, the hydroxyl group present at C-33 and discriminating between FPY and dFPY, is likely to be installed by the cytochrome P450 monooxygenase FPY7. No putative function can be predicted for the remaining genes FPY3-FPY6. The sequence is that of FAD-dependent monooxygenase FPY4 from Fusarium mangiferae (Mango malformation disease fungus).